A 313-amino-acid polypeptide reads, in one-letter code: Pseudouridine-5'-phosphate glycosidase (313 aa).

Glu26 functions as the Proton donor in the catalytic mechanism. Substrate contacts are provided by Lys87 and Ala107. Asp139 contacts Mn(2+). Position 141–143 (141–143) interacts with substrate; that stretch reads SAD. Lys160 acts as the Nucleophile in catalysis.

It belongs to the pseudouridine-5'-phosphate glycosidase family. As to quaternary structure, homotrimer. Mn(2+) is required as a cofactor.

It carries out the reaction D-ribose 5-phosphate + uracil = psi-UMP + H2O. Its function is as follows. Catalyzes the reversible cleavage of pseudouridine 5'-phosphate (PsiMP) to ribose 5-phosphate and uracil. Functions biologically in the cleavage direction, as part of a pseudouridine degradation pathway. This chain is Pseudouridine-5'-phosphate glycosidase, found in Corynebacterium aurimucosum (strain ATCC 700975 / DSM 44827 / CIP 107346 / CN-1) (Corynebacterium nigricans).